The chain runs to 642 residues: Protein BZZ1 (642 aa).

One can recognise an F-BAR domain in the interval 6–272 (YKFSDELHDD…EIAKNEPVLD (267 aa)). A coiled-coil region spans residues 113–190 (LDIAEKLKKL…QRNLKLSESD (78 aa)). A Phorbol-ester/DAG-type zinc finger spans residues 397–447 (FHDFKHVSFKLPTSCSYCREIIWGLSKRGCVCKNCGFKCHARCELLVPANC). SH3 domains lie at 515–575 (ASKV…LNDE) and 584–642 (GDSS…VTDV).

The protein belongs to the BZZ1 family.

It localises to the cell tip. The protein localises to the cytoplasm. It is found in the cytoskeleton. Its subcellular location is the actin patch. Its function is as follows. Plays a role in endocytosis and trafficking to the vacuole. Functions with type I myosins to restore polarity of the actin cytoskeleton after NaCl stress. The sequence is that of Protein BZZ1 (bzz1) from Schizosaccharomyces pombe (strain 972 / ATCC 24843) (Fission yeast).